Reading from the N-terminus, the 239-residue chain is MIAFSLLCLAAVLRQSFGNVDFNSESTRRKKKQKEIVDLHNSLRRRVSPTASNMLKMEWYPEAASNAERWANTCSLNHSPDNLRVLEGIQCGESIYMSSNARTWTEIIHLWHDEYKNFVYGVGANPPGSVTGHYTQIVWYQTYRAGCAVSYCPSSAWSYFYVCQYCPSGNFQGKTATPYKLGPPCGDCPSACDNGLCTNPCTIYNKLTNCDSLLKQGSCQDDWIKSNCPASCFCRNKII.

Residues 1-18 (MIAFSLLCLAAVLRQSFG) form the signal peptide. In terms of domain architecture, SCP spans 37-165 (VDLHNSLRRR…AWSYFYVCQY (129 aa)). Intrachain disulfides connect Cys74-Cys152, Cys91-Cys166, Cys147-Cys163, Cys185-Cys192, Cys188-Cys197, Cys201-Cys234, Cys210-Cys228, and Cys219-Cys232. Positions 201–234 (CTIYNKLTNCDSLLKQGSCQDDWIKSNCPASCFC) constitute a ShKT domain.

Belongs to the CRISP family. In terms of tissue distribution, expressed by the venom gland.

It localises to the secreted. Its function is as follows. Inhibits calcium-activated potassium channels (KCa), voltage-gated potassium channel (Kv), and the calcium release channel/ryanodine receptor (RyR). In Naja kaouthia (Monocled cobra), this protein is Cysteine-rich venom protein kaouthin-1.